The following is a 127-amino-acid chain: Large ribosomal subunit protein bL17 (127 aa).

It belongs to the bacterial ribosomal protein bL17 family. In terms of assembly, part of the 50S ribosomal subunit. Contacts protein L32.

This is Large ribosomal subunit protein bL17 from Lactobacillus helveticus (strain DPC 4571).